A 118-amino-acid polypeptide reads, in one-letter code: MALLPRLAAGGLLLLLALAALDGKPAPPKLLQKLMDGGQRRSEDQAAAGRIIDYEDGDEPVAVSVGDTKQAARALSPLRKPQPLCSCTDMSDLECMNFCHKDVIWINRNRKPSPIQSS.

The first 23 residues, 1-23, serve as a signal peptide directing secretion; the sequence is MALLPRLAAGGLLLLLALAALDG. Positions 24-84 are excised as a propeptide; the sequence is KPAPPKLLQK…LSPLRKPQPL (61 aa). 2 disulfide bridges follow: C85/C99 and C87/C95. A propeptide spanning residues 112–118 is cleaved from the precursor; that stretch reads PSPIQSS.

It belongs to the endothelin/sarafotoxin family. In terms of processing, different length molecules ranging from 15 (85-99) to 30 amino acids (85-114) have been found in the venom. In terms of tissue distribution, expressed by the venom gland.

The protein resides in the secreted. In terms of biological role, vasoconstrictor activity. These toxins cause cardiac arrest probably as a result of coronary vasospasm. Its function is as follows. Sarafotoxin-i3: vasoconstrictor activity. Causes cardiac arrest probably as a result of coronary vasospasm. Displays low agonistic activities towards endothelin-2 receptor (EDNRB) (displays affinity in the micromolar range). The polypeptide is Sarafotoxin-i1 (Atractaspis irregularis (Variable burrowing asp)).